The following is a 319-amino-acid chain: Taste receptor type 2 member 14 (319 aa).

Residues 1–7 (MDGVIKS) lie on the Extracellular side of the membrane. A helical transmembrane segment spans residues 8 to 28 (IFTFILILEFIIGNLGNSFIV). Topologically, residues 29–55 (LVNCIDWVKRRKISLVDQLLIALAISR) are cytoplasmic. A helical transmembrane segment spans residues 56–76 (ISLVWSIFGSWCVSVVFPALF). Residues 77 to 87 (ATEKLLRMLTN) lie on the Extracellular side of the membrane. Cholesterol is bound by residues threonine 86 and tryptophan 89. A helical transmembrane segment spans residues 88–108 (IWTVTNHFSVWLATILGTFYF). Topologically, residues 109 to 129 (LKIANFSNSIFLYLKWRVKKV) are cytoplasmic. The helical transmembrane segment at 130 to 150 (VLVLLLVTLVLLFLNILLINI) threads the bilayer. Residues 151-184 (HINASINGYRGNMTCSSASCNFIRFSSAIALTST) are Extracellular-facing. Asparagine 153 and asparagine 162 each carry an N-linked (GlcNAc...) asparagine glycan. Alanine 180 contacts cholesterol. A helical transmembrane segment spans residues 185-205 (VFILIPFTLSLATFLLLSFSL). The Cytoplasmic segment spans residues 206 to 232 (WKHRKKMQHTVKGYRDVSTKAHRGVMQ). The chain crosses the membrane as a helical span at residues 233-253 (TVITFLLLYAVFFLTFFVSIW). Residues 254 to 261 (ISERLKEN) lie on the Extracellular side of the membrane. The helical transmembrane segment at 262 to 282 (QIIILSEMMGLAYPSGHSCVL) threads the bilayer. The cholesterol site is built by isoleucine 265 and glutamate 268. At 283–317 (ILGNKKLRQASLSVLWWLRYRFKDGELSGHKEFRE) the chain is on the cytoplasmic side.

It belongs to the G-protein coupled receptor T2R family. In terms of assembly, core component of the TAS2R14-GNAI1 complex, consisting of TAS2R14, GNAI1, GNB1 and GNG2; within the complex interacts with GNAI1. Core component of the TAS2R14-GNAT3 complex, consisting of TAS2R14, GNAT3, GNB1 and GNG2; within the complex interacts with GNAT3. Core component of the TAS2R14-GNAS2 complex, consisting of TAS2R14, GNAS2, GNB1 and GNG2; within the complex interacts with GNAS2.

The protein resides in the membrane. It catalyses the reaction Ca(2+)(in) = Ca(2+)(out). The catalysed reaction is 3',5'-cyclic AMP(in) = 3',5'-cyclic AMP(out). With respect to regulation, basal activity is enhanced by binding to bitter tastants, such as flufenamic acid and aristolochic acid. Regulated by cholesterol in a concentration-dependent manner. Functionally, gustducin-linked G-protein coupled receptor that plays a role in the perception of bitterness. The activity of this receptor stimulates GNAT3, activating the gustducin G-protein pathway. Likely plays a role in sensing the chemical composition of the gastrointestinal content and other extra-oral tissues via the inhibitory G-protein pathways. This Papio hamadryas (Hamadryas baboon) protein is Taste receptor type 2 member 14 (TAS2R14).